The primary structure comprises 219 residues: Small ribosomal subunit protein uS3 (219 aa).

Residues 41 to 110 enclose the KH type-2 domain; the sequence is IRKIINTEYS…DVSINICEVK (70 aa).

Belongs to the universal ribosomal protein uS3 family. In terms of assembly, part of the 30S ribosomal subunit. Forms a tight complex with proteins S10 and S14.

Binds the lower part of the 30S subunit head. Binds mRNA in the 70S ribosome, positioning it for translation. In Orientia tsutsugamushi (strain Ikeda) (Rickettsia tsutsugamushi), this protein is Small ribosomal subunit protein uS3.